The sequence spans 388 residues: L-lactate dehydrogenase (388 aa).

Residues 1–380 form the FMN hydroxy acid dehydrogenase domain; that stretch reads MIISAASDYR…SADALSRVTR (380 aa). Y24 contacts substrate. S106 and Q127 together coordinate FMN. Y129 provides a ligand contact to substrate. T155 lines the FMN pocket. R164 lines the substrate pocket. FMN is bound at residue K251. Residue H275 is the Proton acceptor of the active site. R278 is a substrate binding site. 306-330 contributes to the FMN binding site; sequence DSGIRSGLDVVRMLALGADAVLLGR.

This sequence belongs to the FMN-dependent alpha-hydroxy acid dehydrogenase family. FMN serves as cofactor.

Its subcellular location is the cell inner membrane. It carries out the reaction (S)-lactate + A = pyruvate + AH2. Functionally, catalyzes the conversion of L-lactate to pyruvate. Is coupled to the respiratory chain. In Xanthomonas euvesicatoria pv. vesicatoria (strain 85-10) (Xanthomonas campestris pv. vesicatoria), this protein is L-lactate dehydrogenase.